Here is a 157-residue protein sequence, read N- to C-terminus: Crossover junction endodeoxyribonuclease RuvC (157 aa).

Residues Asp-7, Glu-67, and Asp-140 contribute to the active site. Asp-7, Glu-67, and Asp-140 together coordinate Mg(2+).

The protein belongs to the RuvC family. Homodimer which binds Holliday junction (HJ) DNA. The HJ becomes 2-fold symmetrical on binding to RuvC with unstacked arms; it has a different conformation from HJ DNA in complex with RuvA. In the full resolvosome a probable DNA-RuvA(4)-RuvB(12)-RuvC(2) complex forms which resolves the HJ. Mg(2+) is required as a cofactor.

It is found in the cytoplasm. It catalyses the reaction Endonucleolytic cleavage at a junction such as a reciprocal single-stranded crossover between two homologous DNA duplexes (Holliday junction).. The RuvA-RuvB-RuvC complex processes Holliday junction (HJ) DNA during genetic recombination and DNA repair. Endonuclease that resolves HJ intermediates. Cleaves cruciform DNA by making single-stranded nicks across the HJ at symmetrical positions within the homologous arms, yielding a 5'-phosphate and a 3'-hydroxyl group; requires a central core of homology in the junction. The consensus cleavage sequence is 5'-(A/T)TT(C/G)-3'. Cleavage occurs on the 3'-side of the TT dinucleotide at the point of strand exchange. HJ branch migration catalyzed by RuvA-RuvB allows RuvC to scan DNA until it finds its consensus sequence, where it cleaves and resolves the cruciform DNA. The polypeptide is Crossover junction endodeoxyribonuclease RuvC (Rickettsia akari (strain Hartford)).